The sequence spans 254 residues: Peptide methionine sulfoxide reductase A5 (254 aa).

An N-terminal signal peptide occupies residues 1 to 26; the sequence is MARGSAAAAIAGVVWVLLLLVGVASG.

The protein belongs to the MsrA Met sulfoxide reductase family.

It catalyses the reaction L-methionyl-[protein] + [thioredoxin]-disulfide + H2O = L-methionyl-(S)-S-oxide-[protein] + [thioredoxin]-dithiol. The catalysed reaction is [thioredoxin]-disulfide + L-methionine + H2O = L-methionine (S)-S-oxide + [thioredoxin]-dithiol. In terms of biological role, catalyzes the reduction of methionine sulfoxide (MetSO) to methionine in proteins. Plays a protective role against oxidative stress by restoring activity to proteins that have been inactivated by methionine oxidation. MSRA family specifically reduces the MetSO S-enantiomer. This Oryza sativa subsp. japonica (Rice) protein is Peptide methionine sulfoxide reductase A5 (MSRA5).